The primary structure comprises 717 residues: Polyribonucleotide nucleotidyltransferase (717 aa).

Mg(2+) is bound by residues D486 and D492. The 60-residue stretch at 553–612 (PKIVQLQIDIDKISLVIGSTGKTVKAITDEFEVRVQIEQDGRITLFGTDNLKMQKAKAKI) folds into the KH domain. Residues 622–715 (GEIYDGIVKK…KFGKIELELA (94 aa)) form the S1 motif domain. The segment at 650-681 (SNRSRSRDDRYGSDIRHSRYSNRNSRYGRDNR) is disordered. Basic and acidic residues predominate over residues 654–666 (RSRDDRYGSDIRH).

This sequence belongs to the polyribonucleotide nucleotidyltransferase family. Requires Mg(2+) as cofactor.

The protein resides in the cytoplasm. It carries out the reaction RNA(n+1) + phosphate = RNA(n) + a ribonucleoside 5'-diphosphate. In terms of biological role, involved in mRNA degradation. Catalyzes the phosphorolysis of single-stranded polyribonucleotides processively in the 3'- to 5'-direction. The protein is Polyribonucleotide nucleotidyltransferase of Borrelia duttonii (strain Ly).